Here is a 510-residue protein sequence, read N- to C-terminus: MFIESFKVESPNVKYTENEINSVYDYETTEVVHENRNGTYQWVVKPKTVKYDFKTDTRVPKLGVMLVGWGGNNGSTLTAGVIANKEGISWATKDKVQQANYFGSLTQASSIRVGSYNGEEIYAPFKSLLPMVNPEDVVFGGWDISDMNLADAMARARVLDIDLQKQLRPYMENMIPLPGIYDPDFIAANQGSRANSVIKGTKKEQVDHIIKDMREFKEKNKVDKLVVLWTANTERYSNVIVGLNDTTENLLASVEKDESEISPSTLYAIACVLEGIPFINGSPQNTFVPGLIELAISKNCLIGGDDFKSGQTKMKSVLVDFLVGAGIKPTSIVSYNHLGNNDGMNLSAPQTFRSKEISKSNVVDDMVASNGILFEPGEHPDHVVVIKYVPYVADSKRAMDEYTSEIFMGGRNTIVLHNTCEDSLLAAPIILDLVLLAELSTRIQFKAEGEGKFHSFHPVATILSYLTKAPLVPPGTPVVNALSKQRAMLENILRACVGLAPENNMIMEYK.

It belongs to the myo-inositol 1-phosphate synthase family. The cofactor is NAD(+). In terms of tissue distribution, expressed in siliques, leaves, roots, seed endosperm, but not in embryos. Highest expression in seeds. In leaves, only expressed in hydathodes and vascular tissue.

It is found in the cytoplasm. The catalysed reaction is D-glucose 6-phosphate = 1D-myo-inositol 3-phosphate. The protein operates within polyol metabolism; myo-inositol biosynthesis; myo-inositol from D-glucose 6-phosphate: step 1/2. Key enzyme in myo-inositol biosynthesis pathway that catalyzes the conversion of glucose 6-phosphate to 1-myo-inositol 1-phosphate in a NAD-dependent manner. This is Inositol-3-phosphate synthase isozyme 2 (IPS2) from Arabidopsis thaliana (Mouse-ear cress).